Here is a 1513-residue protein sequence, read N- to C-terminus: Lid2 complex component lid2 (1513 aa).

Positions 56–97 (GLSVQLNASNMTDPFKFLLDNWHTIFKNGAIKLLPPEGWQIP) constitute a JmjN domain. An ARID domain is found at 121–212 (YEKNYDYFKK…YIKPFERDSS (92 aa)). The tract at residues 211–253 (SSPSFKSKRSESSTRKIRNTRSSAQQESPIPETSAQSPVQTIQ) is disordered. Positions 230–253 (TRSSAQQESPIPETSAQSPVQTIQ) are enriched in polar residues. Residues 268 to 318 (GEQCEYCGLDKNPETILLCDGCEAAYHTSCLDPPLTSIPKEDWYCDACKFN) form a PHD-type 1 zinc finger. Positions 408–574 (KYSSEPWNLH…DGLLNSSISV (167 aa)) constitute a JmjC domain. A Phosphoserine modification is found at S722. The segment at 1063 to 1086 (LSLNDRPGPPMEPASRETSPDSEG) is disordered. Over residues 1076–1086 (ASRETSPDSEG) the composition is skewed to basic and acidic residues. The segment at 1093 to 1145 (KKGCIFCFCRLPESGVMIECEICHEWYHAKCLKMSKKKLRQDEKFTCPICDYR) adopts a PHD-type 2 zinc-finger fold. The segment at 1096-1143 (CIFCFCRLPESGVMIECEICHEWYHAKCLKMSKKKLRQDEKFTCPICD) adopts an RING-type 1; degenerate zinc-finger fold. Disordered regions lie at residues 1244–1268 (APNPPPIIGESKSTRKPRPTKRQRQ) and 1280–1327 (ASAI…NNKN). Residues 1257–1268 (TRKPRPTKRQRQ) show a composition bias toward basic residues. The span at 1301–1313 (VEAETKSKSEKSP) shows a compositional bias: basic and acidic residues. A compositionally biased stretch (polar residues) spans 1316–1326 (NGTNISDANNK). A PHD-type 3 zinc finger spans residues 1352-1403 (NSSCLCGEEFSPRDSFIDCTICERRFHYDCVGLNNEIADSVSKFTCPICMEQ). The segment at 1354-1401 (SCLCGEEFSPRDSFIDCTICERRFHYDCVGLNNEIADSVSKFTCPICM) adopts an RING-type 2; degenerate zinc-finger fold.

As to quaternary structure, component of the Lid2 complex composed of ash2, jmj3, lid2, sdc1 and snt2.

The protein resides in the nucleus. The chain is Lid2 complex component lid2 (lid2) from Schizosaccharomyces pombe (strain 972 / ATCC 24843) (Fission yeast).